A 371-amino-acid chain; its full sequence is Glutamate 5-kinase (371 aa).

Lys12 lines the ATP pocket. Residues Ser52, Asp136, and Asn148 each contribute to the substrate site. Residues 168-169 and 210-216 each bind ATP; these read SD and TGGMRTK. A PUA domain is found at 275 to 354; it reads QGEILVDEGA…EDIAEKFGYS (80 aa).

The protein belongs to the glutamate 5-kinase family.

Its subcellular location is the cytoplasm. It carries out the reaction L-glutamate + ATP = L-glutamyl 5-phosphate + ADP. Its pathway is amino-acid biosynthesis; L-proline biosynthesis; L-glutamate 5-semialdehyde from L-glutamate: step 1/2. In terms of biological role, catalyzes the transfer of a phosphate group to glutamate to form L-glutamate 5-phosphate. The sequence is that of Glutamate 5-kinase from Idiomarina loihiensis (strain ATCC BAA-735 / DSM 15497 / L2-TR).